The sequence spans 258 residues: Imidazole glycerol phosphate synthase subunit HisF (258 aa).

Catalysis depends on residues D11 and D130.

It belongs to the HisA/HisF family. In terms of assembly, heterodimer of HisH and HisF.

Its subcellular location is the cytoplasm. It carries out the reaction 5-[(5-phospho-1-deoxy-D-ribulos-1-ylimino)methylamino]-1-(5-phospho-beta-D-ribosyl)imidazole-4-carboxamide + L-glutamine = D-erythro-1-(imidazol-4-yl)glycerol 3-phosphate + 5-amino-1-(5-phospho-beta-D-ribosyl)imidazole-4-carboxamide + L-glutamate + H(+). The protein operates within amino-acid biosynthesis; L-histidine biosynthesis; L-histidine from 5-phospho-alpha-D-ribose 1-diphosphate: step 5/9. Functionally, IGPS catalyzes the conversion of PRFAR and glutamine to IGP, AICAR and glutamate. The HisF subunit catalyzes the cyclization activity that produces IGP and AICAR from PRFAR using the ammonia provided by the HisH subunit. The protein is Imidazole glycerol phosphate synthase subunit HisF of Shigella boydii serotype 18 (strain CDC 3083-94 / BS512).